The primary structure comprises 151 residues: SsrA-binding protein (151 aa).

The protein belongs to the SmpB family.

The protein resides in the cytoplasm. Required for rescue of stalled ribosomes mediated by trans-translation. Binds to transfer-messenger RNA (tmRNA), required for stable association of tmRNA with ribosomes. tmRNA and SmpB together mimic tRNA shape, replacing the anticodon stem-loop with SmpB. tmRNA is encoded by the ssrA gene; the 2 termini fold to resemble tRNA(Ala) and it encodes a 'tag peptide', a short internal open reading frame. During trans-translation Ala-aminoacylated tmRNA acts like a tRNA, entering the A-site of stalled ribosomes, displacing the stalled mRNA. The ribosome then switches to translate the ORF on the tmRNA; the nascent peptide is terminated with the 'tag peptide' encoded by the tmRNA and targeted for degradation. The ribosome is freed to recommence translation, which seems to be the essential function of trans-translation. This Nitrosomonas europaea (strain ATCC 19718 / CIP 103999 / KCTC 2705 / NBRC 14298) protein is SsrA-binding protein.